A 280-amino-acid chain; its full sequence is tRNase Z TRZ1 (280 aa).

This sequence belongs to the RNase Z family. As to quaternary structure, homodimer. Zn(2+) is required as a cofactor. Ca(2+) serves as cofactor. Requires Mn(2+) as cofactor. It depends on Mg(2+) as a cofactor.

It localises to the cytoplasm. It catalyses the reaction Endonucleolytic cleavage of RNA, removing extra 3' nucleotides from tRNA precursor, generating 3' termini of tRNAs. A 3'-hydroxy group is left at the tRNA terminus and a 5'-phosphoryl group is left at the trailer molecule.. Its function is as follows. Zinc phosphodiesterase, which displays tRNA 3'-processing endonuclease activity. Involved in tRNA maturation, by removing a 3'-trailer from precursor tRNA. Can use bis-(p-nitophenyl) phosphate (bpNPP) as substrate. Involved in the processing of small nucleolar RNAs (snoRNAs). The protein is tRNase Z TRZ1 of Arabidopsis thaliana (Mouse-ear cress).